A 251-amino-acid polypeptide reads, in one-letter code: Probable aquaporin TIP4-1 (251 aa).

2 helical membrane passes run 26-46 and 57-77; these read LVLT…AGVP and ALAG…TAGF. Residues 85-87 carry the NPA 1 motif; that stretch reads NPA. A run of 3 helical transmembrane segments spans residues 104-124, 144-164, and 170-190; these read ALYV…LRYL, GLVM…ATIL, and VPGF…IAGG. An NPA 2 motif is present at residues 198–200; it reads NPA. The helical transmembrane segment at 219–239 threads the bilayer; it reads WLGPLIGGPLAGLVYESLFLV.

This sequence belongs to the MIP/aquaporin (TC 1.A.8) family. TIP (TC 1.A.8.10) subfamily. Expressed in roots, leaves and anthers.

The protein localises to the vacuole membrane. Functionally, aquaporins facilitate the transport of water and small neutral solutes across cell membranes. May be involved in transport from the vacuolar compartment to the cytoplasm. The protein is Probable aquaporin TIP4-1 (TIP4-1) of Oryza sativa subsp. japonica (Rice).